The primary structure comprises 95 residues: Integration host factor subunit beta (95 aa).

It belongs to the bacterial histone-like protein family. Heterodimer of an alpha and a beta chain.

Its function is as follows. This protein is one of the two subunits of integration host factor, a specific DNA-binding protein that functions in genetic recombination as well as in transcriptional and translational control. This Erwinia tasmaniensis (strain DSM 17950 / CFBP 7177 / CIP 109463 / NCPPB 4357 / Et1/99) protein is Integration host factor subunit beta.